The primary structure comprises 1029 residues: Tyrosine-protein kinase-like otk (1029 aa).

Residues 1 to 18 (MISIYGLVMALMMASVLA) form the signal peptide. Over 19-577 (SSSRFQRVPQ…GGDGFLVTRA (559 aa)) the chain is Extracellular. Ig-like C2-type domains lie at 21–110 (SRFQ…AKLS), 109–195 (LSVI…RVMS), 247–361 (PEDL…APIS), 364–459 (PGIL…VAIN), and 464–554 (PKFS…VQLV). Asparagine 35 carries N-linked (GlcNAc...) asparagine glycosylation. 4 disulfide bridges follow: cysteine 42-cysteine 91, cysteine 133-cysteine 184, cysteine 272-cysteine 350, and cysteine 395-cysteine 443. Residues asparagine 332, asparagine 413, asparagine 425, asparagine 440, asparagine 453, asparagine 508, and asparagine 520 are each glycosylated (N-linked (GlcNAc...) asparagine). Residues cysteine 486 and cysteine 538 are joined by a disulfide bond. Residues 578–598 (VLITMTVALAYIVLVVGLMLW) form a helical membrane-spanning segment. Residues 599–1029 (CRYRRQARKA…LSKAMQSAEK (431 aa)) lie on the Cytoplasmic side of the membrane. Disordered regions lie at residues 613 to 675 (LSTK…KKSA) and 714 to 756 (SPSD…KTSM). The segment covering 651 to 669 (KSSGDAQKSDDTACSQQSR) has biased composition (polar residues). Serine 674 carries the post-translational modification Phosphoserine. Positions 688–1024 (LSELIQIGRG…QLGAALSKAM (337 aa)) constitute a Protein kinase; inactive domain. The span at 716–727 (SDKDADTEKQHS) shows a compositional bias: basic and acidic residues.

The protein belongs to the protein kinase superfamily. Tyr protein kinase family. Insulin receptor subfamily. In terms of assembly, interacts with plexA; component of a receptor complex that mediates the repulsive signaling in response to Semaphorin ligands.

The protein localises to the cell membrane. Functionally, acts as a calcium-dependent, homophilic cell adhesion molecule that regulates neural recognition during the development of the nervous system. Component of the repulsive Plexin signaling response to regulate motor axon guidance at the embryonic stage. Also component of a receptor complex that is required in the adult visual system to innervate the lamina layer; specific targeting of R1-R6 axons. The sequence is that of Tyrosine-protein kinase-like otk from Drosophila simulans (Fruit fly).